Consider the following 439-residue polypeptide: MLRFAPSPTGDMHIGNLRAAIFNYIVAKQQYKPFLIRIEDTDKERNIEGKDQEILEILKLMGISWDKLVYQSHNIDYHREMAEKLLKENKAFYCYASAEFLEREKEKAKNEKRPFRYSDEWATLEKDKHHAPVVRLKAPNHAVSFNDAIKKEVKFEPDELDSFVLLRQDKSPTYNFACACDDLLYKISLIIRGEDHVSNTPKQILIQQALGSNDPIVYAHLPIILDEVSGKKMSKRDEASSVKWLLNQGFLPVAIANYLITIGNKVPKEVFSLDEAIEWFSLENLSSSPAHFNLKYLKHLNHEHLKLLDDDKLLELTSIKDKNLLGLLRLFIEECGTLLELREKISLFLEPKDIVKTYENEDFKERCLALFNALTSMDFQAYKDFESFKKEAMRLSQLKGKDFFKPLRILLTGNSHGVELPLIFPYIQSHHQEVLRLKA.

Residues 6-16 carry the 'HIGH' region motif; sequence PSPTGDMHIGN. The short motif at 232–236 is the 'KMSKS' region element; sequence KMSKR. Lysine 235 contacts ATP.

The protein belongs to the class-I aminoacyl-tRNA synthetase family. Glutamate--tRNA ligase type 1 subfamily. In terms of assembly, monomer.

Its subcellular location is the cytoplasm. It carries out the reaction tRNA(Glu) + L-glutamate + ATP = L-glutamyl-tRNA(Gln) + AMP + diphosphate. In terms of biological role, aminoacylates tRNA(Gln) with glutamate. Does not aminoacylate tRNA(Glu). This chain is GlutamylGlutaminyl-tRNA synthetase (gltX2), found in Helicobacter pylori (strain ATCC 700392 / 26695) (Campylobacter pylori).